The primary structure comprises 274 residues: 2,3,4,5-tetrahydropyridine-2,6-dicarboxylate N-succinyltransferase (274 aa).

Positions 104 and 141 each coordinate substrate.

Belongs to the transferase hexapeptide repeat family. As to quaternary structure, homotrimer.

It is found in the cytoplasm. It catalyses the reaction (S)-2,3,4,5-tetrahydrodipicolinate + succinyl-CoA + H2O = (S)-2-succinylamino-6-oxoheptanedioate + CoA. Its pathway is amino-acid biosynthesis; L-lysine biosynthesis via DAP pathway; LL-2,6-diaminopimelate from (S)-tetrahydrodipicolinate (succinylase route): step 1/3. The chain is 2,3,4,5-tetrahydropyridine-2,6-dicarboxylate N-succinyltransferase from Wigglesworthia glossinidia brevipalpis.